The following is a 379-amino-acid chain: Chaperone protein DnaJ (379 aa).

Positions 5–69 (EYYERLGVDK…QKRAAYDQYG (65 aa)) constitute a J domain. The CR-type zinc finger occupies 141–223 (GVEKQVKYNR…CHGSGHEKVA (83 aa)). The Zn(2+) site is built by C154, C157, C171, C174, C197, C200, C211, and C214. CXXCXGXG motif repeat units follow at residues 154 to 161 (CHTCGGSG), 171 to 178 (CHKCGGRG), 197 to 204 (CDVCHGTG), and 211 to 218 (CTTCHGSG).

Belongs to the DnaJ family. In terms of assembly, homodimer. Requires Zn(2+) as cofactor.

The protein localises to the cytoplasm. Functionally, participates actively in the response to hyperosmotic and heat shock by preventing the aggregation of stress-denatured proteins and by disaggregating proteins, also in an autonomous, DnaK-independent fashion. Unfolded proteins bind initially to DnaJ; upon interaction with the DnaJ-bound protein, DnaK hydrolyzes its bound ATP, resulting in the formation of a stable complex. GrpE releases ADP from DnaK; ATP binding to DnaK triggers the release of the substrate protein, thus completing the reaction cycle. Several rounds of ATP-dependent interactions between DnaJ, DnaK and GrpE are required for fully efficient folding. Also involved, together with DnaK and GrpE, in the DNA replication of plasmids through activation of initiation proteins. This chain is Chaperone protein DnaJ, found in Lactococcus lactis subsp. cremoris (strain MG1363).